Consider the following 123-residue polypeptide: Small ribosomal subunit protein uS12c (123 aa).

This sequence belongs to the universal ribosomal protein uS12 family. In terms of assembly, part of the 30S ribosomal subunit.

Its subcellular location is the plastid. It is found in the chloroplast. Its function is as follows. With S4 and S5 plays an important role in translational accuracy. Located at the interface of the 30S and 50S subunits. In Physcomitrium patens (Spreading-leaved earth moss), this protein is Small ribosomal subunit protein uS12c (rps12).